Here is a 283-residue protein sequence, read N- to C-terminus: Elongation factor Ts (283 aa).

The tract at residues 84 to 87 (TDFV) is involved in Mg(2+) ion dislocation from EF-Tu.

This sequence belongs to the EF-Ts family.

It is found in the cytoplasm. In terms of biological role, associates with the EF-Tu.GDP complex and induces the exchange of GDP to GTP. It remains bound to the aminoacyl-tRNA.EF-Tu.GTP complex up to the GTP hydrolysis stage on the ribosome. The sequence is that of Elongation factor Ts from Bifidobacterium longum (strain DJO10A).